The following is a 588-amino-acid chain: Methylcrotonoyl-CoA carboxylase beta chain, mitochondrial (588 aa).

The region spanning 72–329 (MNSTLKQLKE…KKQPSPVITE (258 aa)) is the CoA carboxyltransferase N-terminal domain. A carboxyltransferase region spans residues 72–570 (MNSTLKQLKE…RKVIALSLSA (499 aa)). The region spanning 329 to 570 (ETEEPLYPTS…RKVIALSLSA (242 aa)) is the CoA carboxyltransferase C-terminal domain. Residues 366–395 (RFDEFKELYGTTLICGFARVHGMPVGIIAN) are acyl-CoA binding.

The protein belongs to the AccD/PCCB family. In terms of assembly, probably a dodecamer composed of six biotin-containing alpha subunits and six beta subunits.

Its subcellular location is the mitochondrion matrix. It carries out the reaction 3-methylbut-2-enoyl-CoA + hydrogencarbonate + ATP = 3-methyl-(2E)-glutaconyl-CoA + ADP + phosphate + H(+). It functions in the pathway amino-acid degradation; L-leucine degradation; (S)-3-hydroxy-3-methylglutaryl-CoA from 3-isovaleryl-CoA: step 2/3. Its function is as follows. Carboxyltransferase subunit of the 3-methylcrotonyl-CoA carboxylase, an enzyme that catalyzes the conversion of 3-methylcrotonyl-CoA to 3-methylglutaconyl-CoA, a critical step for leucine and isovaleric acid catabolism. The sequence is that of Methylcrotonoyl-CoA carboxylase beta chain, mitochondrial (mccb) from Dictyostelium discoideum (Social amoeba).